Consider the following 648-residue polypeptide: ABC transporter G family member 14 (648 aa).

Residues 53–304 form the ABC transporter domain; the sequence is LKFEEVVYKV…FSSLGFSTSL (252 aa). Residue 99–106 coordinates ATP; sequence GPSGSGKT. N-linked (GlcNAc...) asparagine glycosylation occurs at asparagine 346. Positions 384–590 constitute an ABC transmembrane type-2 domain; it reads YQFTVLLQRG…CYKLLLGIQY (207 aa). The next 7 helical transmembrane spans lie at 405–425, 435–455, 485–505, 512–532, 543–562, 569–591, and 620–640; these read LRIF…WHTP, LLFF…VFTF, LPLE…MGGL, FILS…LGLA, ATTL…GYYV, IVWL…IQYT, and LWID…MAYM.

The protein belongs to the ABC transporter superfamily. ABCG family. Eye pigment precursor importer (TC 3.A.1.204) subfamily. Forms heterodimers with ABCG11. As to expression, accumulates primarily in the pericycle and stelar cells of roots. Expressed in leaves, stems, flowers and siliques, and, at low levels, in roots. Accumulates in the phloem.

It is found in the cell membrane. Positive regulator of plant growth which acts as an efflux pump involved in the major root-to-shoot (acropetal) long-distance cytokinin (CK) transport via the xylem sap. Together with ABCG9 and ABCG11, required for vascular development by regulating lipid/sterol homeostasis. Involved in CK-dependent responses to oxidative stress such as hydrogen peroxide H(2)O(2). Functionally, (Microbial infection) Required for SNC1-mediated defense response against the virulent pathogen Pseudomonas syringae pv. tomato DC3000 by promoting the accumulation of trans-zeatin (tZ)-type cytokinins (CK) in the shoot. The protein is ABC transporter G family member 14 of Arabidopsis thaliana (Mouse-ear cress).